A 247-amino-acid chain; its full sequence is Eukaryotic translation initiation factor 6 (247 aa).

2 positions are modified to phosphoserine; by CK1: Ser174 and Ser175.

This sequence belongs to the eIF-6 family. Monomer. Associates with the 60S ribosomal subunit. Post-translationally, phosphorylation at Ser-174 and Ser-175 promotes nuclear export.

The protein resides in the cytoplasm. It localises to the nucleus. It is found in the nucleolus. Binds to the 60S ribosomal subunit and prevents its association with the 40S ribosomal subunit to form the 80S initiation complex in the cytoplasm. Is also involved in ribosome biogenesis. Associates with pre-60S subunits in the nucleus and is involved in its nuclear export. The chain is Eukaryotic translation initiation factor 6 (tif6) from Emericella nidulans (strain FGSC A4 / ATCC 38163 / CBS 112.46 / NRRL 194 / M139) (Aspergillus nidulans).